A 180-amino-acid polypeptide reads, in one-letter code: Trafficking protein particle complex subunit 3 (180 aa).

Cys-68 is lipidated: S-palmitoyl cysteine.

The protein belongs to the TRAPP small subunits family. BET3 subfamily. Homodimer. Component of the multisubunit transport protein particle (TRAPP) complex, which includes at least TRAPPC2, TRAPPC2L, TRAPPC3, TRAPPC3L, TRAPPC4, TRAPPC5, TRAPPC8, TRAPPC9, TRAPPC10, TRAPPC11 and TRAPPC12. Heterodimer with TRAPPC6A. The heterodimer TRAPPC3-TRAPPC6A interacts with TRAPPC2L. Heterodimer with TRAPPC6b. The heterodimer TRAPPC6B-TRAPPC3 interacts with TRAPPC1 likely providing a core for TRAPP complex formation. In terms of tissue distribution, widely expressed. Expressed in lung, heart, liver, spleen, brain and kidney.

Its subcellular location is the golgi apparatus. The protein resides in the cis-Golgi network. The protein localises to the endoplasmic reticulum. In terms of biological role, may play a role in vesicular transport from endoplasmic reticulum to Golgi. The protein is Trafficking protein particle complex subunit 3 of Mus musculus (Mouse).